We begin with the raw amino-acid sequence, 292 residues long: Peroxisomal 2,4-dienoyl-CoA reductase [(3E)-enoyl-CoA-producing] (292 aa).

Residue alanine 2 is modified to N-acetylalanine. NADP(+)-binding positions include 35-40, 60-64, and aspartate 86; these read GGGSGI and RSLQK. Residue arginine 60 coordinates substrate. N6-acetyllysine is present on lysine 64. Substrate is bound by residues arginine 88, phenylalanine 118, and 126–128; that span reads SFN. Residue lysine 151 is modified to N6-acetyllysine. NADP(+) contacts are provided by residues lysine 182 and 208 to 214; that span reads PGAISGT. Arginine 219 provides a ligand contact to substrate. Serine 287 carries the post-translational modification Phosphoserine. Positions 290–292 match the Microbody targeting signal motif; the sequence is AKL. Residue lysine 291 is modified to N6-acetyllysine.

This sequence belongs to the short-chain dehydrogenases/reductases (SDR) family. 2,4-dienoyl-CoA reductase subfamily. In terms of assembly, monomer, dimer and oligomer.

Its subcellular location is the peroxisome. It catalyses the reaction a (2E,4Z)-dienoyl-CoA + NADPH + H(+) = a 4,5-saturated-(3E)-enoyl-CoA + NADP(+). It carries out the reaction a (2E,4E)-dienoyl-CoA + NADPH + H(+) = a 4,5-saturated-(3E)-enoyl-CoA + NADP(+). The enzyme catalyses (2E,4E)-hexadienoyl-CoA + NADPH + H(+) = (3E)-hexenoyl-CoA + NADP(+). The catalysed reaction is (2E,4E)-decadienoyl-CoA + NADPH + H(+) = (3E)-decenoyl-CoA + NADP(+). It catalyses the reaction (2E,4Z,7Z,10Z,13Z,16Z,19Z)-docosaheptaenoyl-CoA + NADPH + H(+) = (3E,7Z,10Z,13Z,16Z,19Z)-docosahexaenoyl-CoA + NADP(+). Functionally, auxiliary enzyme of beta-oxidation. Participates in the degradation of unsaturated fatty enoyl-CoA esters having double bonds in both even- and odd-numbered positions in peroxisome. Catalyzes the NADP-dependent reduction of 2,4-dienoyl-CoA to yield trans-3-enoyl-CoA. Has activity towards short and medium chain 2,4-dienoyl-CoAs, but also towards 2,4,7,10,13,16,19-docosaheptaenoyl-CoA, suggesting that it does not constitute a rate limiting step in the peroxisomal degradation of docosahexaenoic acid. This chain is Peroxisomal 2,4-dienoyl-CoA reductase [(3E)-enoyl-CoA-producing] (Decr2), found in Mus musculus (Mouse).